We begin with the raw amino-acid sequence, 502 residues long: NAD(P)H-quinone oxidoreductase chain 4, chloroplastic (502 aa).

The next 14 membrane-spanning stretches (helical) occupy residues 4–24 (FPWL…IFFF), 37–57 (ICIC…HFQL), 87–107 (VGPI…AWPV), 113–130 (LFHF…GLFS), 134–154 (LLLF…LLSM), 167–187 (FILY…GMGL), 208–228 (ALEI…LPII), 242–262 (HYST…YGLV), 272–292 (AHSI…IYAA), 305–325 (IAYS…SITD), 330–350 (GAIL…FLAG), 374–396 (IFTM…GFAA), 416–436 (ILIT…SLSM), and 464–484 (LFVS…PDFV).

This sequence belongs to the complex I subunit 4 family.

Its subcellular location is the plastid. The protein localises to the chloroplast thylakoid membrane. The enzyme catalyses a plastoquinone + NADH + (n+1) H(+)(in) = a plastoquinol + NAD(+) + n H(+)(out). The catalysed reaction is a plastoquinone + NADPH + (n+1) H(+)(in) = a plastoquinol + NADP(+) + n H(+)(out). This is NAD(P)H-quinone oxidoreductase chain 4, chloroplastic from Ranunculus macranthus (Large buttercup).